A 263-amino-acid chain; its full sequence is MAQDVTYSSYLDLDRILAAQHPVSGAHDEMLFIIVHQASELWLKLCLHELFAARDCIAADNLRPSFKMLSRVARAQTQLIQSWDVLSTMTPHDYSQIRPHLGRSSGFQSPQYRMMEFLLGGRNPDMVAMHEPTPEIATALREELARTSLYDEAIRLLSRRGFAIPDEVLARKLDEVWVRSEEVEAAWAEIYRDPQQHWDLYELAEKLVDLEYHFQRWRFGHLKTVERIIGFKRGTGGTKGVPYLEGVLKQAFFPELLSVRTAI.

Substrate-binding positions include 32-36 (FIIVH), tyrosine 94, and arginine 98. Histidine 221 lines the heme pocket. Substrate is bound at residue threonine 235.

This sequence belongs to the tryptophan 2,3-dioxygenase family. In terms of assembly, homotetramer. Requires heme as cofactor.

It catalyses the reaction L-tryptophan + O2 = N-formyl-L-kynurenine. The protein operates within amino-acid degradation; L-tryptophan degradation via kynurenine pathway; L-kynurenine from L-tryptophan: step 1/2. Its function is as follows. Heme-dependent dioxygenase that catalyzes the oxidative cleavage of the L-tryptophan (L-Trp) pyrrole ring and converts L-tryptophan to N-formyl-L-kynurenine. Catalyzes the oxidative cleavage of the indole moiety. The polypeptide is Tryptophan 2,3-dioxygenase (Erythrobacter litoralis (strain HTCC2594)).